The sequence spans 218 residues: Probable transaldolase (218 aa).

Lysine 87 (schiff-base intermediate with substrate) is an active-site residue.

Belongs to the transaldolase family. Type 3B subfamily.

The protein resides in the cytoplasm. It carries out the reaction D-sedoheptulose 7-phosphate + D-glyceraldehyde 3-phosphate = D-erythrose 4-phosphate + beta-D-fructose 6-phosphate. The protein operates within carbohydrate degradation; pentose phosphate pathway; D-glyceraldehyde 3-phosphate and beta-D-fructose 6-phosphate from D-ribose 5-phosphate and D-xylulose 5-phosphate (non-oxidative stage): step 2/3. Functionally, transaldolase is important for the balance of metabolites in the pentose-phosphate pathway. This is Probable transaldolase from Bacteroides fragilis (strain ATCC 25285 / DSM 2151 / CCUG 4856 / JCM 11019 / LMG 10263 / NCTC 9343 / Onslow / VPI 2553 / EN-2).